A 144-amino-acid chain; its full sequence is Small polypeptide DEVIL 18 (144 aa).

Low complexity predominate over residues 30 to 58; sequence SFSTKTSSSSSKPVFTRSFSTKPTSYSSS. The interval 30–89 is disordered; it reads SFSTKTSSSSSKPVFTRSFSTKPTSYSSSEPIFRRSFSAKPTSSKSPFLSRSGSTKCPVD. The helical transmembrane segment at 42–58 threads the bilayer; the sequence is PVFTRSFSTKPTSYSSS. The span at 68-84 shows a compositional bias: polar residues; the sequence is AKPTSSKSPFLSRSGST. A required for DVL/RTFL small polypeptide activity region spans residues 108–139; sequence SVTRKCRNMAKEHKSRFYIMKRCVLMLVCWHK.

Belongs to the DVL/RTFL small polypeptides family.

It localises to the cell membrane. Small polypeptide acting as a regulatory molecule which coordinates cellular responses required for differentiation, growth and development, probably by restricting polar cell proliferation in lateral organs and coordinating socket cell recruitment and differentiation at trichome sites. This chain is Small polypeptide DEVIL 18, found in Arabidopsis thaliana (Mouse-ear cress).